The primary structure comprises 801 residues: Cadherin-20 (801 aa).

The N-terminal stretch at 1 to 34 (MWTTGRMSNAKSWLGLGTSLYFWALMDLTATVLS) is a signal peptide. A propeptide spanning residues 35-59 (STPMPEVELETLFSGRSQSHQRSKR) is cleaved from the precursor. The Extracellular portion of the chain corresponds to 60 to 619 (SWVWNQFFVL…AYLLPVSLSR (560 aa)). Cadherin domains are found at residues 61 to 165 (WVWN…EPKF), 166 to 274 (LDGP…PPRF), 275 to 389 (PQKH…PPVF), 390 to 494 (EPGF…APEF), and 494 to 610 (FPRF…SPEA). N-linked (GlcNAc...) asparagine glycosylation is present at asparagine 261. N-linked (GlcNAc...) asparagine glycosylation is found at asparagine 420, asparagine 461, and asparagine 542. The chain crosses the membrane as a helical span at residues 620–640 (GALIAILACIFVLLVLVLLIL). Residues 641–801 (SMRRHRKQPY…GASEGPAPLW (161 aa)) lie on the Cytoplasmic side of the membrane.

As to expression, expressed in brain. Highest level of expression in the retina. In embryo it is synthesized by the forebrain, anterior neural ridge, developing visual system, primitive external granular layer of the cerebellum and a subset of neural crest cells likely to develop into melanoblasts.

The protein resides in the cell membrane. Functionally, cadherins are calcium-dependent cell adhesion proteins. They preferentially interact with themselves in a homophilic manner in connecting cells; cadherins may thus contribute to the sorting of heterogeneous cell types. The chain is Cadherin-20 (Cdh20) from Mus musculus (Mouse).